The sequence spans 164 residues: S-ribosylhomocysteine lyase (164 aa).

Fe cation contacts are provided by histidine 54, histidine 58, and cysteine 128.

It belongs to the LuxS family. As to quaternary structure, homodimer. The cofactor is Fe cation.

It carries out the reaction S-(5-deoxy-D-ribos-5-yl)-L-homocysteine = (S)-4,5-dihydroxypentane-2,3-dione + L-homocysteine. Functionally, involved in the synthesis of autoinducer 2 (AI-2) which is secreted by bacteria and is used to communicate both the cell density and the metabolic potential of the environment. The regulation of gene expression in response to changes in cell density is called quorum sensing. Catalyzes the transformation of S-ribosylhomocysteine (RHC) to homocysteine (HC) and 4,5-dihydroxy-2,3-pentadione (DPD). In Campylobacter jejuni subsp. doylei (strain ATCC BAA-1458 / RM4099 / 269.97), this protein is S-ribosylhomocysteine lyase.